The following is a 190-amino-acid chain: 3-isopropylmalate dehydratase small subunit (190 aa).

The protein belongs to the LeuD family. LeuD type 1 subfamily. Heterodimer of LeuC and LeuD.

The enzyme catalyses (2R,3S)-3-isopropylmalate = (2S)-2-isopropylmalate. It functions in the pathway amino-acid biosynthesis; L-leucine biosynthesis; L-leucine from 3-methyl-2-oxobutanoate: step 2/4. Catalyzes the isomerization between 2-isopropylmalate and 3-isopropylmalate, via the formation of 2-isopropylmaleate. In Staphylococcus aureus (strain USA300), this protein is 3-isopropylmalate dehydratase small subunit.